The following is a 212-amino-acid chain: Response regulator SsrB (212 aa).

The segment at 1-138 (MKEYKILLVD…PTLNREAILA (138 aa)) is required for prevention of DNA binding in absence of phosphorylation and for full stimulation of activity by acidic pH. The Response regulatory domain maps to 5 to 121 (KILLVDDHEI…VLLAALQTVA (117 aa)). The residue at position 56 (Asp56) is a 4-aspartylphosphate. Positions 143–208 (DTTNHQLLTL…ELLNCARRMR (66 aa)) constitute an HTH luxR-type domain. Positions 167-186 (NHGISEKLHISIKTVETHRM) form a DNA-binding region, H-T-H motif. Cys203 carries the post-translational modification S-nitrosocysteine.

Homodimer; disulfide-linked; dimerizes upon DNA-binding. SsrB phosphorylated on Asp-56 activates the expression of virulence genes whereas the unphosphorylated form controls biofilm formation. Independently of SsrA, can be phosphorylated by small inorganic phosphate donors (such as acetyl phosphate or phosphoramidate). In terms of processing, disulfide bond formation at Cys-203 is not required for dimerization. Post-translationally, cys-203 may serve as a redox sensor that is nitrosylated in presence of reactive nitrogen species (RNS) generated by the host, the modification modulates its DNA-binding activity. Cys-203 is relatively resistant to oxidation by hydrogen peroxide.

The protein localises to the cytoplasm. Functionally, member of the two-component regulatory system SsrA/SsrB (SpiR/SsrB) that is required for intracellular proliferation and systemic dissemination within the host. When inside acidic Salmonella-containing vesicles (SCV) within host cells the SsrA sensor kinase autophosphorylates and the phosphoryl group is transferred to the response regulator SsrB; phosphorylated SsrB activates the expression of genes encoding virulence proteins, including pathogenicity island 2 (SPI2) and other horizontally acquired genes, but also ancestral genes; it can stimulate gene expression both by recruiting RNA polymerase and by antagonizing the action of the transcriptional repressor hns (H-NS). Can also act independently of sensor kinase ssrA to support the dormant carrier state by directing the transcription of factors required for biofilm formation. DNA-binding is stimulated by acidic pH conditions, and binding promotes bending of DNA both upstream and downstream of binding sites. Binds a degenerate 18-basepair palindromic sequence with a 7-4-7 internal organization, and regulates gene expression from 86 operons. When phosphorylated, activates the transcription of the ABC transporter complex dalSTUV, which helps protect the organism from oxidative killing by host neutrophils. Binds the phoP promoter to stimulate expression in acidic pH conditions. Antagonizes hns to activate the transcription of ugtL. Following invasion of host cells, binds the hilD and hilA regulatory regions to repress their transcription and consequently to repress transcription of pathogenicity island 1 (SPI1) encoding genes involved in host cell invasion. Binds the promoters of the flagellar master regulators flhD and flhC to repress their expression and consequently to suppress flagellar motility and promote evasion of the host inflammasome during infection of host cells. Activates expression of sseI/srfH, sifA, sifB, sseJ and regulates its own expression. When unphosphorylated, relieves the hns-mediated repression of master biofilm regulator csgD by binding and bending the csgD regulatory region. May act as early as in the lumen of the host small intestine, to activate the expression of virulence proteins prior to invasion of host cells. The sequence is that of Response regulator SsrB from Salmonella typhimurium (strain LT2 / SGSC1412 / ATCC 700720).